The sequence spans 494 residues: DBIRD complex subunit ZNF326 (494 aa).

3 disordered regions span residues M1–S22, A147–M170, and K202–K264. Polar residues predominate over residues S7 to S22. The Bipartite nuclear localization signal motif lies at K200 to K221. C2H2 AKAP95-type zinc fingers lie at residues C273–H295 and C365–H388. The tract at residues P429–V494 is disordered. Residues Q433 to Q451 are compositionally biased toward acidic residues.

Belongs to the AKAP95 family. Component of the DBIRD complex.

It localises to the nucleus. Functionally, core component of the DBIRD complex, a multiprotein complex that acts at the interface between core mRNP particles and RNA polymerase II (RNAPII) and integrates transcript elongation with the regulation of alternative splicing. This Xenopus laevis (African clawed frog) protein is DBIRD complex subunit ZNF326 (znf326).